The chain runs to 155 residues: Ribosome maturation factor RimP (155 aa).

Belongs to the RimP family.

It localises to the cytoplasm. In terms of biological role, required for maturation of 30S ribosomal subunits. This is Ribosome maturation factor RimP from Listeria monocytogenes serovar 1/2a (strain ATCC BAA-679 / EGD-e).